We begin with the raw amino-acid sequence, 1270 residues long: Breakpoint cluster region protein (1270 aa).

Methionine 1 is modified (N-acetylmethionine). Positions 1-428 (MVDSVGFAEA…DGDSTFQGEA (428 aa)) are kinase. Positions 28-55 (VGDIEQELERCKASIRRLEQEVNQERFR) form a coiled coil. The segment at 67–173 (KKSYDRQRWG…GPAQPGSADA (107 aa)) is disordered. Over residues 121–139 (GSPSKGRSASARRPAAAAS) the composition is skewed to low complexity. Serine 122 and serine 139 each carry phosphoserine. Tyrosine 178 carries the post-translational modification Phosphotyrosine; by HCK. The interval 198-387 (SDRISSLGSQ…QSFDSSSPPT (190 aa)) is binding to ABL SH2-domain. Disordered stretches follow at residues 201–249 (ISSL…DYED), 295–396 (KSPL…RHRQ), and 412–481 (TGQI…SGAL). A phosphoserine mark is found at serine 203, serine 216, and serine 237. Tyrosine 247 is modified (phosphotyrosine; by FES). 2 stretches are compositionally biased toward low complexity: residues 348 to 358 (SSGQSSRVSPS) and 371 to 384 (SPSQNSQQSFDSSS). Residues serine 358, serine 379, and serine 384 each carry the phosphoserine modification. Threonine 387 carries the post-translational modification Phosphothreonine. Residues serine 461 and serine 465 each carry the phosphoserine modification. Arginine 473 is modified (omega-N-methylarginine). Phosphoserine occurs at positions 475 and 487. The DH domain maps to 497 to 690 (MRKWVLSGIL…QNFLSSINEE (194 aa)). Residue tyrosine 553 is modified to Phosphotyrosine. A Phosphothreonine modification is found at threonine 640. Tyrosine 643 carries the phosphotyrosine modification. Threonine 692 carries the phosphothreonine modification. A PH domain is found at 707–865 (QLLKDSFMVE…WRESIREQQK (159 aa)). A C2 domain is found at 892–1019 (HHIPLTINKE…QDRDWQRTVI (128 aa)). Positions 1053–1247 (VKIAVVTKRE…VMSQVQVLLY (195 aa)) constitute a Rho-GAP domain. Position 1263 is a phosphoserine (serine 1263).

In terms of assembly, homotetramer. Interacts with PDZK1. Interacts with HCK, FES/FPS, ABL1, PIK3R1 and GRB2. May interact with CCPG1. Interacts with SH2D5. Interacts with DLG4. In terms of processing, autophosphorylated. Phosphorylated by FES/FPS on tyrosine residues, leading to down-regulation of the BCR kinase activity. Phosphorylation at Tyr-178 by HCK is important for interaction with GRB2. In terms of tissue distribution, expressed in brain. In hippocampal subregions, most abundant in the CA1 region and expressed at successively lower levels in the dentate gyrus and the CA3 region.

The protein localises to the postsynaptic density. It localises to the cell projection. It is found in the dendritic spine. Its subcellular location is the axon. The protein resides in the synapse. The catalysed reaction is L-seryl-[protein] + ATP = O-phospho-L-seryl-[protein] + ADP + H(+). It catalyses the reaction L-threonyl-[protein] + ATP = O-phospho-L-threonyl-[protein] + ADP + H(+). In terms of biological role, protein with a unique structure having two opposing regulatory activities toward small GTP-binding proteins. The C-terminus is a GTPase-activating protein (GAP) domain which stimulates GTP hydrolysis by RAC1, RAC2 and CDC42. Accelerates the intrinsic rate of GTP hydrolysis of RAC1 or CDC42, leading to down-regulation of the active GTP-bound form. The central Dbl homology (DH) domain functions as guanine nucleotide exchange factor (GEF) that modulates the GTPases CDC42, RHOA and RAC1. Promotes the conversion of CDC42, RHOA and RAC1 from the GDP-bound to the GTP-bound form. The amino terminus contains an intrinsic kinase activity. Functions as an important negative regulator of neuronal RAC1 activity. Regulates macrophage functions such as CSF1-directed motility and phagocytosis through the modulation of RAC1 activity. Plays a major role as a RHOA GEF in keratinocytes being involved in focal adhesion formation and keratinocyte differentiation. This is Breakpoint cluster region protein from Mus musculus (Mouse).